A 486-amino-acid polypeptide reads, in one-letter code: Glutamate--tRNA ligase (486 aa).

The 'HIGH' region motif lies at 11-21; it reads PSPTGLLHIGN. The short motif at 255–259 is the 'KMSKS' region element; that stretch reads KLSKR. Residue Lys258 participates in ATP binding.

This sequence belongs to the class-I aminoacyl-tRNA synthetase family. Glutamate--tRNA ligase type 1 subfamily. As to quaternary structure, monomer.

It is found in the cytoplasm. It carries out the reaction tRNA(Glu) + L-glutamate + ATP = L-glutamyl-tRNA(Glu) + AMP + diphosphate. In terms of biological role, catalyzes the attachment of glutamate to tRNA(Glu) in a two-step reaction: glutamate is first activated by ATP to form Glu-AMP and then transferred to the acceptor end of tRNA(Glu). The protein is Glutamate--tRNA ligase of Streptococcus pneumoniae (strain Hungary19A-6).